Here is a 170-residue protein sequence, read N- to C-terminus: Large ribosomal subunit protein uL10 (170 aa).

Belongs to the universal ribosomal protein uL10 family. In terms of assembly, part of the ribosomal stalk of the 50S ribosomal subunit. The N-terminus interacts with L11 and the large rRNA to form the base of the stalk. The C-terminus forms an elongated spine to which L12 dimers bind in a sequential fashion forming a multimeric L10(L12)X complex.

Its function is as follows. Forms part of the ribosomal stalk, playing a central role in the interaction of the ribosome with GTP-bound translation factors. The sequence is that of Large ribosomal subunit protein uL10 (rplJ) from Chlamydia pneumoniae (Chlamydophila pneumoniae).